The chain runs to 353 residues: Lipase chaperone (353 aa).

Residues 12–32 form a helical membrane-spanning segment; it reads IVLYLILGCVVVCGVWYSFDV.

It belongs to the lipase chaperone family.

The protein resides in the cell inner membrane. Its function is as follows. May be involved in the folding of the extracellular lipase during its passage through the periplasm. The chain is Lipase chaperone from Xylella fastidiosa (strain M23).